We begin with the raw amino-acid sequence, 198 residues long: Protein-L-isoaspartate O-methyltransferase (198 aa).

Serine 50 is a catalytic residue.

Belongs to the methyltransferase superfamily. L-isoaspartyl/D-aspartyl protein methyltransferase family.

It localises to the cytoplasm. The catalysed reaction is [protein]-L-isoaspartate + S-adenosyl-L-methionine = [protein]-L-isoaspartate alpha-methyl ester + S-adenosyl-L-homocysteine. In terms of biological role, catalyzes the methyl esterification of L-isoaspartyl residues in peptides and proteins that result from spontaneous decomposition of normal L-aspartyl and L-asparaginyl residues. It plays a role in the repair and/or degradation of damaged proteins. The sequence is that of Protein-L-isoaspartate O-methyltransferase from Thermosipho melanesiensis (strain DSM 12029 / CIP 104789 / BI429).